Consider the following 166-residue polypeptide: MMAFLLDIITFLQISFSTNIFRINYKWVSDGYDEYKKRLSKLIPLELIELPIAKRTKTGNPKLWMEQEAKTILGKLNDSDHLVILDVNSKIISTEELADKMQNWKFNNPNVVILIGGPDGIDQSIKDIAKEKISISKMTFPHPLVRIIAEQLYRAYTILEGHPYHK.

Residues Leu-85, Gly-116, and Ile-135–Phe-140 contribute to the S-adenosyl-L-methionine site.

Belongs to the RNA methyltransferase RlmH family. Homodimer.

It is found in the cytoplasm. It carries out the reaction pseudouridine(1915) in 23S rRNA + S-adenosyl-L-methionine = N(3)-methylpseudouridine(1915) in 23S rRNA + S-adenosyl-L-homocysteine + H(+). Functionally, specifically methylates the pseudouridine at position 1915 (m3Psi1915) in 23S rRNA. The chain is Ribosomal RNA large subunit methyltransferase H from Francisella tularensis subsp. holarctica (strain FTNF002-00 / FTA).